Consider the following 312-residue polypeptide: Malate dehydrogenase (312 aa).

Residues 12–17 (GAGFTG) and D36 contribute to the NAD(+) site. Residues R87 and R93 each contribute to the substrate site. NAD(+)-binding positions include N100 and 123 to 125 (LTN). N125 is a binding site for substrate. S149 is modified (phosphoserine). A substrate-binding site is contributed by R156. H180 serves as the catalytic Proton acceptor.

It belongs to the LDH/MDH superfamily. MDH type 3 family.

It catalyses the reaction (S)-malate + NAD(+) = oxaloacetate + NADH + H(+). Catalyzes the reversible oxidation of malate to oxaloacetate. The protein is Malate dehydrogenase of Geobacillus kaustophilus (strain HTA426).